Reading from the N-terminus, the 314-residue chain is Solute carrier family 25 member 33 (314 aa).

Solcar repeat units follow at residues 4–111 (KDTL…SKET), 119–206 (NSGV…LKKY), and 224–308 (SDFL…IVHL). Transmembrane regions (helical) follow at residues 7-27 (LLHL…TCPL), 44-58 (VFQV…AGVI), 114-134 (GIFV…AAFI), 183-203 (LTAS…YETL), 226-246 (FLGL…IAYP), and 291-311 (QIPN…LLAE).

It belongs to the mitochondrial carrier (TC 2.A.29) family.

It is found in the mitochondrion inner membrane. In terms of biological role, mitochondrial transporter that imports/exports pyrimidine nucleotides into and from mitochondria which participates in dendritic cell endocytosis. In Danio rerio (Zebrafish), this protein is Solute carrier family 25 member 33 (slc25a33).